Here is a 359-residue protein sequence, read N- to C-terminus: Molybdenum import ATP-binding protein ModC (359 aa).

An ABC transporter domain is found at 1–233; that stretch reads MSGLTVSIRG…IDAESEGGGV (233 aa). 32 to 39 provides a ligand contact to ATP; sequence GHSGAGKT. In terms of domain architecture, Mop spans 289 to 355; sequence AISIRNLLPV…VKAVSVDRAA (67 aa).

It belongs to the ABC transporter superfamily. Molybdate importer (TC 3.A.1.8) family. As to quaternary structure, the complex is composed of two ATP-binding proteins (ModC), two transmembrane proteins (ModB) and a solute-binding protein (ModA).

The protein localises to the cell inner membrane. It carries out the reaction molybdate(out) + ATP + H2O = molybdate(in) + ADP + phosphate + H(+). In terms of biological role, part of the ABC transporter complex ModABC involved in molybdenum import. Responsible for energy coupling to the transport system. This chain is Molybdenum import ATP-binding protein ModC, found in Brucella melitensis biotype 1 (strain ATCC 23456 / CCUG 17765 / NCTC 10094 / 16M).